The sequence spans 721 residues: Centlein (721 aa).

Residues 52-164 (KNEKAISEQT…LRDENEEVVN (113 aa)) adopt a coiled-coil conformation. Disordered stretches follow at residues 156 to 180 (RDENEEVVNPEEKEHCPTDKAKSEM) and 259 to 288 (ETSQNIRPIENDGNQKETDQTEDSRAQQEV). Basic and acidic residues-rich tracts occupy residues 165–178 (PEEKEHCPTDKAKS) and 267–284 (IENDGNQKETDQTEDSRA). Coiled coils occupy residues 345 to 515 (LLRE…EDLK) and 573 to 626 (QSEQ…TQKS). Position 658 is a phosphothreonine (Thr658).

As to quaternary structure, interacts with CEP250 and CEP68. Interacts with NEK2; the interaction leads to phosphorylation of CNTLN. In terms of processing, phosphorylated directly or indirectly by NEK2.

Its subcellular location is the cytoplasm. The protein localises to the cytoskeleton. The protein resides in the microtubule organizing center. It is found in the centrosome. It localises to the centriole. Its function is as follows. Required for centrosome cohesion and recruitment of CEP68 to centrosomes. This Rattus norvegicus (Rat) protein is Centlein.